The primary structure comprises 225 residues: GTP-binding nuclear protein Ran (225 aa).

Positions 8–172 (VVAEFKLVLV…LWILRKLTGD (165 aa)) constitute a Small GTPase Ran-type domain. 19-26 (DGGVGKTT) provides a ligand contact to GTP. Residues 38 to 46 (KRYIATQGV) form a switch-I region. Residues Gly-69, 123–126 (NKVD), and 151–153 (SAK) each bind GTP. The tract at residues 69 to 85 (GQEKLGGLREGYYIGAN) is switch-II.

It belongs to the small GTPase superfamily. Ran family. In terms of assembly, monomer. Found in a nuclear export complex with RanGTP, exportin and pre-miRNA.

The protein localises to the nucleus. In terms of biological role, GTP-binding protein involved in nucleocytoplasmic transport. Required for the import of protein into the nucleus and also for RNA export. Involved in chromatin condensation and control of cell cycle. In Tetrahymena thermophila, this protein is GTP-binding nuclear protein Ran.